Consider the following 456-residue polypeptide: MEPSPDAEEAHTVREALGRYEAALEGAVRALHEDMQGLQRGVERRVAEALRLAGPLARTVAELQRDNQRLQAQLERLTRQVEALGLATGVSPAPGTPSPPPAATVTDRAPRLGTARFSSHATFSLSGRSPSVEHDEASDLEVRRASNSCILENGHQLDAGPANGSSEVQTSSAQEPPRPRPVSLSLRMPHQPVTAVTRVSEKFSGETSASALSPTSAAIVGGFTPSPSEAISPWTPSPTEKSSSFTRSLSGSGYGAVTAGKRKDSPPLVTPPQSPPSSQPPAMTQAPRQGERRRELVRSQTLPRTSGAQARKALFEKWEQDTASKGKGETRAKLKRSQSFGVASASSIKQILLEWCRSKTVGYQHVDLQNFSSSWSDGMAFCALVHSFFPDAFDYNALSPTQRQKNFELAFTMAENLANCERLIEVEDMMVMGRKPDPMCVFTYVQSLYNHLRRFE.

Residues Leu-24–Thr-88 adopt a coiled-coil conformation. Position 96 is a phosphothreonine (Thr-96). 3 positions are modified to phosphoserine: Ser-98, Ser-126, and Ser-131. Residues His-120–Ser-129 show a composition bias toward polar residues. 3 disordered regions span residues His-120–Leu-140, Gly-154–His-190, and Val-220–Ala-310. Over residues Ser-131–Leu-140 the composition is skewed to basic and acidic residues. Residues Asn-163–Gln-174 show a composition bias toward polar residues. Positions Ser-242–Gly-251 are enriched in low complexity. A phosphoserine mark is found at Ser-250, Ser-252, and Ser-265. The span at Leu-268 to Gln-279 shows a compositional bias: pro residues. A Phosphothreonine modification is found at Thr-270. Residue Ser-274 is modified to Phosphoserine. Polar residues predominate over residues Arg-298–Ala-308. A Phosphoserine modification is found at Ser-339. The region spanning Ser-346 to Arg-453 is the Calponin-homology (CH) domain.

The protein belongs to the smoothelin family.

The protein is Smoothelin-like protein 2 (Smtnl2) of Mus musculus (Mouse).